A 657-amino-acid chain; its full sequence is Pentatricopeptide repeat-containing protein At2g37310 (657 aa).

15 PPR repeats span residues 21-55 (DGGA…SIKP), 56-86 (DNFL…ITVR), 87-121 (NAFS…SCYS), 128-165 (DSIS…GFDS), 166-196 (DVFV…MSER), 197-232 (DVVS…DFKP), 233-267 (NGVT…HIQM), 268-298 (DLSL…MSEK), 299-333 (DSVT…GLST), 334-364 (WNAM…GSRP), 365-399 (NTVT…GADN), 400-430 (NIYV…CKDR), 431-465 (SLIA…GTKP), 466-501 (DDVT…DIEP), and 502-536 (GVEH…PIAK). The segment at 537-612 (VWGALLNGAS…IPGTSWIETE (76 aa)) is type E motif. The segment at 613-643 (KGLRSFIAKDSSCERSKEMYEIIEGLVESMS) is type E(+) motif.

It belongs to the PPR family. PCMP-E subfamily.

The protein is Pentatricopeptide repeat-containing protein At2g37310 (PCMP-E49) of Arabidopsis thaliana (Mouse-ear cress).